Reading from the N-terminus, the 66-residue chain is Neurotoxin Cex11 (66 aa).

In terms of domain architecture, LCN-type CS-alpha/beta spans 1 to 64; that stretch reads KEGYPVNIYT…SYPYPEKSCG (64 aa). Intrachain disulfides connect Cys-12-Cys-63, Cys-16-Cys-39, Cys-25-Cys-44, and Cys-29-Cys-46. Cys-63 carries the post-translational modification Cysteine amide. Residues 64–66 constitute a propeptide that is removed on maturation; it reads GRK.

Belongs to the long (4 C-C) scorpion toxin superfamily. Sodium channel inhibitor family. Beta subfamily. In terms of tissue distribution, expressed by the venom gland.

It is found in the secreted. Beta toxins bind voltage-independently at site-4 of sodium channels (Nav) and shift the voltage of activation toward more negative potentials thereby affecting sodium channel activation and promoting spontaneous and repetitive firing. The protein is Neurotoxin Cex11 of Centruroides exilicauda (Bark scorpion).